A 407-amino-acid chain; its full sequence is Protein ATC1/LIC4 (407 aa).

Its subcellular location is the cytoplasm. It localises to the nucleus. Functionally, involved in cation homeostasis and in the regulation of the cation stress signaling cascades. This chain is Protein ATC1/LIC4 (ATC1), found in Eremothecium gossypii (strain ATCC 10895 / CBS 109.51 / FGSC 9923 / NRRL Y-1056) (Yeast).